The primary structure comprises 196 residues: MDQSGSNTNMDIEKESTTFDYSKRSQWLRAAVLGANDGLVSTASLMMGVGAVKHDVKAMILSGFAGMVAGACSMAIGEFVSVYSQYDIEVAQMERDSVEIEKEKLPSPMQAAAASALAFSAGAIVPLLAAAFVKEYKMRIISVVVAVTVALMVFGWLGAALGKAPAVRSSARVLFGGWLAMAVTFGLTKLIGLYGL.

The Cytoplasmic portion of the chain corresponds to 1–31 (MDQSGSNTNMDIEKESTTFDYSKRSQWLRAA). The helical transmembrane segment at 32–52 (VLGANDGLVSTASLMMGVGAV) threads the bilayer. Residues 53 to 59 (KHDVKAM) lie on the Vacuolar side of the membrane. Residues 60–80 (ILSGFAGMVAGACSMAIGEFV) traverse the membrane as a helical segment. The Cytoplasmic portion of the chain corresponds to 81–112 (SVYSQYDIEVAQMERDSVEIEKEKLPSPMQAA). Residues 113-133 (AASALAFSAGAIVPLLAAAFV) traverse the membrane as a helical segment. The Vacuolar segment spans residues 134–139 (KEYKMR). The helical transmembrane segment at 140 to 160 (IISVVVAVTVALMVFGWLGAA) threads the bilayer. The Cytoplasmic segment spans residues 161–172 (LGKAPAVRSSAR). A helical membrane pass occupies residues 173–193 (VLFGGWLAMAVTFGLTKLIGL). The Vacuolar portion of the chain corresponds to 194–196 (YGL).

This sequence belongs to the CCC1 family. In terms of tissue distribution, expressed in roots, leaves and inflorescences.

It is found in the vacuole membrane. The enzyme catalyses Fe(2+)(in) = Fe(2+)(out). Vacuolar iron transporter involved in the transfer of iron ions from the cytosol to the vacuole for intracellular iron storage. Involved in regulation of cellular iron homeostasis. Vacuolar iron storage is required for seed embryo and seedling development. The protein is Vacuolar iron transporter homolog 2 of Arabidopsis thaliana (Mouse-ear cress).